The chain runs to 590 residues: Auxin response factor 20 (590 aa).

A DNA-binding region (TF-B3) is located at residues 126-224; it reads FTKVLTASDT…ELRVGIRRAR (99 aa). Residues 495–576 form the PB1 domain; it reads RTCTKVQMQG…MVKKILIYSK (82 aa).

This sequence belongs to the ARF family. In terms of assembly, homodimers and heterodimers.

It is found in the nucleus. In terms of biological role, auxin response factors (ARFs) are transcriptional factors that bind specifically to the DNA sequence 5'-TGTCTC-3' found in the auxin-responsive promoter elements (AuxREs). Could act as transcriptional activator or repressor. Formation of heterodimers with Aux/IAA proteins may alter their ability to modulate early auxin response genes expression. The chain is Auxin response factor 20 (ARF20) from Arabidopsis thaliana (Mouse-ear cress).